Consider the following 318-residue polypeptide: NADH-ubiquinone oxidoreductase chain 1 (318 aa).

The next 8 helical transmembrane spans lie at 2–22 (FMIN…FLTL), 70–90 (MFIL…IPLP), 100–120 (LGVL…LWSG), 147–167 (AIIL…TLII), 172–192 (MWLI…TLAE), 222–242 (LFFM…AILF), 253–273 (ELYT…FLWI), and 294–314 (LPLT…TSGI).

Belongs to the complex I subunit 1 family. In terms of assembly, core subunit of respiratory chain NADH dehydrogenase (Complex I) which is composed of 45 different subunits.

It is found in the mitochondrion inner membrane. The catalysed reaction is a ubiquinone + NADH + 5 H(+)(in) = a ubiquinol + NAD(+) + 4 H(+)(out). Its function is as follows. Core subunit of the mitochondrial membrane respiratory chain NADH dehydrogenase (Complex I) which catalyzes electron transfer from NADH through the respiratory chain, using ubiquinone as an electron acceptor. Essential for the catalytic activity and assembly of complex I. The chain is NADH-ubiquinone oxidoreductase chain 1 (MT-ND1) from Bos indicus (Zebu).